The sequence spans 722 residues: Fatty acid oxidation complex subunit alpha (722 aa).

An enoyl-CoA hydratase/isomerase region spans residues 1–189 (MIYQGKSLSA…AQGAIDAVVE (189 aa)). D296 serves as a coordination point for substrate. The tract at residues 311 to 722 (TKAVNKAAVL…SYFTTDVKLA (412 aa)) is 3-hydroxyacyl-CoA dehydrogenase. NAD(+)-binding positions include M325, D344, 401-403 (VVE), K408, and S430. H451 functions as the For 3-hydroxyacyl-CoA dehydrogenase activity in the catalytic mechanism. An NAD(+)-binding site is contributed by N454. 2 residues coordinate substrate: N501 and Y661.

It in the N-terminal section; belongs to the enoyl-CoA hydratase/isomerase family. The protein in the C-terminal section; belongs to the 3-hydroxyacyl-CoA dehydrogenase family. As to quaternary structure, heterotetramer of two alpha chains (FadB) and two beta chains (FadA).

It catalyses the reaction a (3S)-3-hydroxyacyl-CoA + NAD(+) = a 3-oxoacyl-CoA + NADH + H(+). The enzyme catalyses a (3S)-3-hydroxyacyl-CoA = a (2E)-enoyl-CoA + H2O. The catalysed reaction is a 4-saturated-(3S)-3-hydroxyacyl-CoA = a (3E)-enoyl-CoA + H2O. It carries out the reaction (3S)-3-hydroxybutanoyl-CoA = (3R)-3-hydroxybutanoyl-CoA. It catalyses the reaction a (3Z)-enoyl-CoA = a 4-saturated (2E)-enoyl-CoA. The enzyme catalyses a (3E)-enoyl-CoA = a 4-saturated (2E)-enoyl-CoA. It functions in the pathway lipid metabolism; fatty acid beta-oxidation. Functionally, involved in the aerobic and anaerobic degradation of long-chain fatty acids via beta-oxidation cycle. Catalyzes the formation of 3-oxoacyl-CoA from enoyl-CoA via L-3-hydroxyacyl-CoA. It can also use D-3-hydroxyacyl-CoA and cis-3-enoyl-CoA as substrate. The polypeptide is Fatty acid oxidation complex subunit alpha (Colwellia psychrerythraea (strain 34H / ATCC BAA-681) (Vibrio psychroerythus)).